Here is a 704-residue protein sequence, read N- to C-terminus: Meprin A subunit beta (704 aa).

The signal sequence occupies residues 1–20 (MDARHWPWFLVFATFLLVSG). The propeptide occupies 21–64 (LPAPEKFVKDIDGGIDQDIFDINEDLGLDLFEGDIKLEASGRNS). The Extracellular portion of the chain corresponds to 21 to 654 (LPAPEKFVKD…RCEKRGSTKD (634 aa)). The 195-residue stretch at 63-257 (NSIIGDNYRW…LKLNQLYSCT (195 aa)) folds into the Peptidase M12A domain. 3 disulfide bridges follow: Cys-104–Cys-256, Cys-125–Cys-145, and Cys-266–Cys-428. His-153 serves as a coordination point for Zn(2+). Residue Glu-154 is part of the active site. 2 residues coordinate Zn(2+): His-157 and His-163. N-linked (GlcNAc...) asparagine glycosylation is found at Asn-193, Asn-219, Asn-316, Asn-422, Asn-437, Asn-528, Asn-547, and Asn-592. Residues 261 to 430 (SFMDSCDFEL…INLSETRCPH (170 aa)) form the MAM domain. Residues 431–585 (HIWHIQNFTQ…GDDVYILLTV (155 aa)) enclose the MATH domain. The 41-residue stretch at 607-647 (VHNACSEVECQNGGICTLQEGRAECKCPAGEDWWYMGKRCE) folds into the EGF-like domain. 3 cysteine pairs are disulfide-bonded: Cys-611-Cys-622, Cys-616-Cys-631, and Cys-633-Cys-646. Residues 655-678 (TIVIAVSSTVTVFAVMLIITLISV) traverse the membrane as a helical segment. Residues 679–704 (YCTRRKYRKKASAKTAAMNLENQHAF) lie on the Cytoplasmic side of the membrane. Thr-693 is subject to Phosphothreonine.

In terms of assembly, homotetramer consisting of disulfide-linked beta subunits, or heterotetramer of two alpha and two beta subunits formed by non-covalent association of two disulfide-linked heterodimers. Interacts with MBL2 through its carbohydrate moiety. This interaction may inhibit its catalytic activity. Interacts with TSPAN8. Zn(2+) serves as cofactor. N-glycosylated; contains high mannose and/or complex biantennary structures. Post-translationally, proteolytically activated by trypsin in the intestinal lumen and kallikrein-related peptidases in other tissues. In terms of processing, phosphorylated by PKC at multiple sites of its cytoplasmic part. Phosphorylation dcreases activity at the cell surface, leading to diminished substrate cleavage. Kidney, intestinal brush borders and salivary ducts.

It localises to the cell membrane. The protein localises to the secreted. The enzyme catalyses Hydrolysis of proteins, including azocasein, and peptides. Hydrolysis of 5-His-|-Leu-6, 6-Leu-|-Cys-7, 14-Ala-|-Leu-15 and 19-Cys-|-Gly-20 bonds in insulin B chain.. Strongly inhibited by fetuin-A/AHSG. Functionally, membrane metallopeptidase that sheds many membrane-bound proteins. Exhibits a strong preference for acidic amino acids at the P1' position. Known substrates include: FGF19, VGFA, IL1B, IL18, procollagen I and III, E-cadherin, KLK7, gastrin, ADAM10, tenascin-C. The presence of several pro-inflammatory cytokine among substrates implicate MEP1B in inflammation. It is also involved in tissue remodeling due to its capability to degrade extracellular matrix components. The polypeptide is Meprin A subunit beta (Mep1b) (Rattus norvegicus (Rat)).